The following is a 155-amino-acid chain: Protein-export protein SecB (155 aa).

This sequence belongs to the SecB family. Homotetramer, a dimer of dimers. One homotetramer interacts with 1 SecA dimer.

The protein localises to the cytoplasm. Functionally, one of the proteins required for the normal export of preproteins out of the cell cytoplasm. It is a molecular chaperone that binds to a subset of precursor proteins, maintaining them in a translocation-competent state. It also specifically binds to its receptor SecA. In Vibrio vulnificus (strain CMCP6), this protein is Protein-export protein SecB.